Here is a 217-residue protein sequence, read N- to C-terminus: Large ribosomal subunit protein uL1 (217 aa).

Belongs to the universal ribosomal protein uL1 family. As to quaternary structure, component of the large ribosomal subunit (LSU). Mature ribosomes consist of a small (40S) and a large (60S) subunit. The 40S subunit contains about 32 different proteins and 1 molecule of RNA (18S). The 60S subunit contains 45 different proteins and 3 molecules of RNA (25S, 5.8S and 5S). uL1 forms part of the L1 stalk.

The protein localises to the cytoplasm. Component of the ribosome, a large ribonucleoprotein complex responsible for the synthesis of proteins in the cell. The small ribosomal subunit (SSU) binds messenger RNAs (mRNAs) and translates the encoded message by selecting cognate aminoacyl-transfer RNA (tRNA) molecules. The large subunit (LSU) contains the ribosomal catalytic site termed the peptidyl transferase center (PTC), which catalyzes the formation of peptide bonds, thereby polymerizing the amino acids delivered by tRNAs into a polypeptide chain. The nascent polypeptides leave the ribosome through a tunnel in the LSU and interact with protein factors that function in enzymatic processing, targeting, and the membrane insertion of nascent chains at the exit of the ribosomal tunnel. uL1 forms part of the L1 stalk, a mobile element that plays a role in evacuating the exit-site tRNA. The chain is Large ribosomal subunit protein uL1 (RPL10A) from Candida albicans (strain SC5314 / ATCC MYA-2876) (Yeast).